Here is a 193-residue protein sequence, read N- to C-terminus: Holliday junction branch migration complex subunit RuvA (193 aa).

The domain I stretch occupies residues 1–64; sequence MIGRIAGILL…EDAHLLYGFL (64 aa). Residues 65-139 are domain II; it reads TQQERTTFRE…GKLGADLGAL (75 aa). Residues 139-143 form a flexible linker region; it reads LAGAA. The tract at residues 144 to 193 is domain III; it reads SPSDHATDILNALLALGYSEKEGLAAIKNVPAGTGVSEGIKLALKALSKA.

The protein belongs to the RuvA family. As to quaternary structure, homotetramer. Forms an RuvA(8)-RuvB(12)-Holliday junction (HJ) complex. HJ DNA is sandwiched between 2 RuvA tetramers; dsDNA enters through RuvA and exits via RuvB. An RuvB hexamer assembles on each DNA strand where it exits the tetramer. Each RuvB hexamer is contacted by two RuvA subunits (via domain III) on 2 adjacent RuvB subunits; this complex drives branch migration. In the full resolvosome a probable DNA-RuvA(4)-RuvB(12)-RuvC(2) complex forms which resolves the HJ.

The protein localises to the cytoplasm. The RuvA-RuvB-RuvC complex processes Holliday junction (HJ) DNA during genetic recombination and DNA repair, while the RuvA-RuvB complex plays an important role in the rescue of blocked DNA replication forks via replication fork reversal (RFR). RuvA specifically binds to HJ cruciform DNA, conferring on it an open structure. The RuvB hexamer acts as an ATP-dependent pump, pulling dsDNA into and through the RuvAB complex. HJ branch migration allows RuvC to scan DNA until it finds its consensus sequence, where it cleaves and resolves the cruciform DNA. This chain is Holliday junction branch migration complex subunit RuvA, found in Burkholderia cenocepacia (strain ATCC BAA-245 / DSM 16553 / LMG 16656 / NCTC 13227 / J2315 / CF5610) (Burkholderia cepacia (strain J2315)).